The chain runs to 368 residues: Ribosomal RNA large subunit methyltransferase M (368 aa).

Residues serine 199, 232-235, aspartate 251, aspartate 271, and aspartate 287 each bind S-adenosyl-L-methionine; that span reads APGG. Lysine 316 functions as the Proton acceptor in the catalytic mechanism.

The protein belongs to the class I-like SAM-binding methyltransferase superfamily. RNA methyltransferase RlmE family. RlmM subfamily. In terms of assembly, monomer.

It is found in the cytoplasm. The enzyme catalyses cytidine(2498) in 23S rRNA + S-adenosyl-L-methionine = 2'-O-methylcytidine(2498) in 23S rRNA + S-adenosyl-L-homocysteine + H(+). Functionally, catalyzes the 2'-O-methylation at nucleotide C2498 in 23S rRNA. In Aromatoleum aromaticum (strain DSM 19018 / LMG 30748 / EbN1) (Azoarcus sp. (strain EbN1)), this protein is Ribosomal RNA large subunit methyltransferase M.